The sequence spans 365 residues: Chorismate synthase (365 aa).

NADP(+)-binding residues include Arg48 and Arg54. Residues 125-127 (RSS), 238-239 (NA), Gly278, 293-297 (KPTSS), and Arg319 contribute to the FMN site.

The protein belongs to the chorismate synthase family. As to quaternary structure, homotetramer. FMNH2 is required as a cofactor.

The enzyme catalyses 5-O-(1-carboxyvinyl)-3-phosphoshikimate = chorismate + phosphate. Its pathway is metabolic intermediate biosynthesis; chorismate biosynthesis; chorismate from D-erythrose 4-phosphate and phosphoenolpyruvate: step 7/7. Catalyzes the anti-1,4-elimination of the C-3 phosphate and the C-6 proR hydrogen from 5-enolpyruvylshikimate-3-phosphate (EPSP) to yield chorismate, which is the branch point compound that serves as the starting substrate for the three terminal pathways of aromatic amino acid biosynthesis. This reaction introduces a second double bond into the aromatic ring system. This is Chorismate synthase from Alteromonas mediterranea (strain DSM 17117 / CIP 110805 / LMG 28347 / Deep ecotype).